The following is a 335-amino-acid chain: Pregnancy-specific beta-1-glycoprotein 5 (335 aa).

Positions 1 to 34 are cleaved as a signal peptide; sequence MGPLSAPPCTQHITWKGLLLTASLLNFWNLPITA. The 110-residue stretch at 35–144 folds into the Ig-like V-type domain; that stretch reads QVTIEALPPK…TGYFTFNLYL (110 aa). Asparagine 104 and asparagine 111 each carry an N-linked (GlcNAc...) asparagine glycan. Residues 127 to 129 carry the Cell attachment site motif; the sequence is RGD. Ig-like C2-type domains follow at residues 147–234 and 239–317; these read PKPY…VTLN and PDLP…KSMT. Intrachain disulfides connect cysteine 169–cysteine 217 and cysteine 261–cysteine 301. N-linked (GlcNAc...) asparagine glycosylation is found at asparagine 175 and asparagine 210.

Belongs to the immunoglobulin superfamily. CEA family. Synthesized by syncytiotrophoblast of the placenta.

The protein resides in the secreted. In Homo sapiens (Human), this protein is Pregnancy-specific beta-1-glycoprotein 5 (PSG5).